The following is a 223-amino-acid chain: Large ribosomal subunit protein uL3 (223 aa).

The disordered stretch occupies residues 137-157 (GRASHGNSRSHNVPGSIGMAQ). Glutamine 157 is modified (N5-methylglutamine).

Belongs to the universal ribosomal protein uL3 family. In terms of assembly, part of the 50S ribosomal subunit. Forms a cluster with proteins L14 and L19. Post-translationally, methylated by PrmB.

Functionally, one of the primary rRNA binding proteins, it binds directly near the 3'-end of the 23S rRNA, where it nucleates assembly of the 50S subunit. The polypeptide is Large ribosomal subunit protein uL3 (Burkholderia pseudomallei (strain 1106a)).